The sequence spans 243 residues: HTH-type transcriptional repressor NagR (243 aa).

The region spanning Ile-9–Pro-77 is the HTH gntR-type domain. The H-T-H motif DNA-binding region spans Glu-37 to Ser-56. Residues Phe-89–Thr-90, Arg-133–Arg-135, Glu-145, Ser-165–Tyr-167, Glu-222, and Tyr-228 each bind alpha-D-glucosamine 6-phosphate. N-acetyl-D-glucosamine 6-phosphate is bound by residues Phe-89–Thr-90, Arg-133–Arg-135, Glu-145, Ser-165–Tyr-167, Glu-222, and Tyr-228.

As to quaternary structure, homodimer. Forms dimers via the C-terminal effector-binding domain. At high concentrations, probably forms polymers along the DNA.

With respect to regulation, binding to DNA is allosterically inhibited by an effector molecule. Binding of the effector to the C-terminal domain leads to a conformational change that modulates binding to DNA and thereby regulates transcription of the target genes. Glucosamine-6-phosphate (GlcN6P) and/or N-acetylglucosamine-6-phosphate (GlcNAc6P) are putative effectors of NagR. Binding of GlcNAc6P may prevent the protein-protein interactions responsible for polymerization along the DNA, but not the specific DNA binding. Its function is as follows. Main transcriptional repressor of genes involved in N-acetylglucosamine (GlcNAc) transport and utilization. Represses the expression of the nagAB and nagP operons by binding directly within their upstream regions. Binds to the DNA consensus sequence 5'-ATTGGTATAGACAACT-3'. Also acts as a weak repressor of mapB expression. In Bacillus subtilis (strain 168), this protein is HTH-type transcriptional repressor NagR.